The primary structure comprises 395 residues: Vibriobactin-specific isochorismate synthase (395 aa).

This sequence belongs to the isochorismate synthase family.

It catalyses the reaction chorismate = isochorismate. It functions in the pathway siderophore biosynthesis; vibriobactin biosynthesis. The sequence is that of Vibriobactin-specific isochorismate synthase (vibC) from Vibrio cholerae serotype O1 (strain ATCC 39315 / El Tor Inaba N16961).